Consider the following 234-residue polypeptide: Adenosine 5'-phosphosulfate reductase (234 aa).

Residues cysteine 120, cysteine 121, cysteine 203, and cysteine 206 each coordinate [4Fe-4S] cluster. Residue cysteine 229 is the Nucleophile; cysteine thiosulfonate intermediate of the active site.

It belongs to the PAPS reductase family. CysH subfamily. Requires [4Fe-4S] cluster as cofactor.

Its subcellular location is the cytoplasm. It carries out the reaction [thioredoxin]-disulfide + sulfite + AMP + 2 H(+) = adenosine 5'-phosphosulfate + [thioredoxin]-dithiol. Its pathway is sulfur metabolism; hydrogen sulfide biosynthesis; sulfite from sulfate. Functionally, catalyzes the formation of sulfite from adenosine 5'-phosphosulfate (APS) using thioredoxin as an electron donor. The polypeptide is Adenosine 5'-phosphosulfate reductase (Bacillus cereus (strain B4264)).